Consider the following 508-residue polypeptide: Glutamyl-tRNA(Gln) amidotransferase subunit B, mitochondrial (508 aa).

It belongs to the GatB/GatE family. GatB subfamily. Subunit of the heterotrimeric GatFAB amidotransferase (AdT) complex, composed of A, B and F subunits.

The protein localises to the mitochondrion. The catalysed reaction is L-glutamyl-tRNA(Gln) + L-glutamine + ATP + H2O = L-glutaminyl-tRNA(Gln) + L-glutamate + ADP + phosphate + H(+). In terms of biological role, allows the formation of correctly charged Gln-tRNA(Gln) through the transamidation of misacylated Glu-tRNA(Gln) in the mitochondria. The reaction takes place in the presence of glutamine and ATP through an activated gamma-phospho-Glu-tRNA(Gln). The protein is Glutamyl-tRNA(Gln) amidotransferase subunit B, mitochondrial of Scheffersomyces stipitis (strain ATCC 58785 / CBS 6054 / NBRC 10063 / NRRL Y-11545) (Yeast).